A 284-amino-acid chain; its full sequence is Tripartite motif-containing protein 12A (284 aa).

An RING-type zinc finger spans residues 15–59; that stretch reads CPVCLNLMVKPVSADCGHTFCQGCITLYFESIKCDKKVFICPVCR. The segment at 91–132 adopts a B box-type zinc-finger fold; that stretch reads QKVFNCARHGKKLQLFCRKDMMAICWLCERSQEHRGHKTALI. Zn(2+) contacts are provided by Cys96, His99, Cys118, and His124. Residues 130–234 adopt a coiled-coil conformation; it reads ALIEEVAQEY…QSKLLEDFIS (105 aa).

The protein belongs to the TRIM/RBCC family. Expressed in embryonic CNS, liver, kidney, olfactory epithelium.

It localises to the cytoplasm. The polypeptide is Tripartite motif-containing protein 12A (Trim12a) (Mus musculus (Mouse)).